Reading from the N-terminus, the 158-residue chain is MEKALKIDTPQQGSIQDINHRVWVLQDQTLIAVPRKDRMSPVTIALISCRHVETLEKDRGNPIYLGLNGLNLCLMCAKVGDQPTLQLKEKDIMDLYNQPEPVKSFLFYHSQSGRNSTFESVAFPGWFIAVSSEGGCPLILTQELGKANTTDFGLTMLF.

The propeptide occupies 1-5 (MEKAL). Residue Tyr-96 is modified to 3'-nitrotyrosine.

The protein belongs to the IL-1 family. As to quaternary structure, interacts with TMED10; the interaction mediates the translocation from the cytoplasm into the ERGIC (endoplasmic reticulum-Golgi intermediate compartment) and thereby secretion. In terms of processing, N-terminal truncation leads to a dramatic enhancement of its activity (&gt;1000-fold). Expressed in immune system and fetal brain, but not in other tissues tested or in multiple hematopoietic cell lines. Predominantly expressed in skin keratinocytes but not in fibroblasts, endothelial cells or melanocytes. Increased in lesional psoriasis skin.

It is found in the cytoplasm. It localises to the secreted. Functionally, cytokine that binds to and signals through the IL1RL2/IL-36R receptor which in turn activates NF-kappa-B and MAPK signaling pathways in target cells linked to a pro-inflammatory response. Part of the IL-36 signaling system that is thought to be present in epithelial barriers and to take part in local inflammatory response; similar to the IL-1 system with which it shares the coreceptor IL1RAP. Seems to be involved in skin inflammatory response by acting on keratinocytes, dendritic cells and indirectly on T-cells to drive tissue infiltration, cell maturation and cell proliferation. In cultured keratinocytes induces the expression of macrophage, T-cell, and neutrophil chemokines, such as CCL3, CCL4, CCL5, CCL2, CCL17, CCL22, CL20, CCL5, CCL2, CCL17, CCL22, CXCL8, CCL20 and CXCL1, and the production of pro-inflammatory cytokines such as TNF-alpha, IL-8 and IL-6. In cultured monocytes up-regulates expression of IL-1A, IL-1B and IL-6. In myeloid dendritic cells involved in cell maturation by up-regulating surface expression of CD83, CD86 and HLA-DR. In monocyte-derived dendritic cells facilitates dendritic cell maturation and drives T-cell proliferation. May play a role in pro-inflammatory effects in the lung. This Homo sapiens (Human) protein is Interleukin-36 alpha.